The primary structure comprises 207 residues: Ribonuclease HII (207 aa).

An RNase H type-2 domain is found at 18 to 207 (TYLSGSDEAG…PIKKISKETS (190 aa)). Positions 24, 25, and 116 each coordinate a divalent metal cation.

It belongs to the RNase HII family. Mn(2+) serves as cofactor. It depends on Mg(2+) as a cofactor.

The protein resides in the cytoplasm. The catalysed reaction is Endonucleolytic cleavage to 5'-phosphomonoester.. In terms of biological role, endonuclease that specifically degrades the RNA of RNA-DNA hybrids. In Mycoplasma capricolum subsp. capricolum (strain California kid / ATCC 27343 / NCTC 10154), this protein is Ribonuclease HII.